The chain runs to 508 residues: Adenylosuccinate synthetase 1, chloroplastic (508 aa).

The N-terminal 56 residues, 1–56, are a transit peptide targeting the chloroplast; the sequence is MNISILRLDSNPITTATSPATATANHRSGILGCYNGTYSCRLNQLQQRKKNPSIIV. GTP is bound by residues 95–101 and 123–125; these read GDEGKGK and GHT. Asp-96 functions as the Proton acceptor in the catalytic mechanism. Positions 96 and 123 each coordinate Mg(2+). Residues 96–99, 121–124, Thr-213, Arg-227, Gln-307, Thr-322, and Arg-386 each bind IMP; these read DEGK and NAGH. Residue His-124 is the Proton donor of the active site. 382 to 388 contributes to the substrate binding site; that stretch reads TTTGRPR. Residues Arg-388, 414-416, and 497-499 contribute to the GTP site; these read KLD and GIG.

Belongs to the adenylosuccinate synthetase family. In terms of assembly, homodimer. Mg(2+) is required as a cofactor.

It is found in the plastid. Its subcellular location is the chloroplast. It carries out the reaction IMP + L-aspartate + GTP = N(6)-(1,2-dicarboxyethyl)-AMP + GDP + phosphate + 2 H(+). The protein operates within purine metabolism; AMP biosynthesis via de novo pathway; AMP from IMP: step 1/2. Functionally, plays an important role in the de novo pathway and in the salvage pathway of purine nucleotide biosynthesis. Catalyzes the first committed step in the biosynthesis of AMP from IMP. The chain is Adenylosuccinate synthetase 1, chloroplastic from Capsicum frutescens (Cayenne pepper).